The primary structure comprises 342 residues: Alpha-(1,3)-fucosyltransferase 7 (342 aa).

The Cytoplasmic portion of the chain corresponds to 1-14; that stretch reads MNNAGHGPTRRLRG. The helical; Signal-anchor for type II membrane protein transmembrane segment at 15–36 threads the bilayer; the sequence is LGVLAGVALLAALWLLWLLGSA. Over 37 to 342 the chain is Lumenal; that stretch reads PRGTPAPQPT…YEDLEGWFQA (306 aa). Cys-68 and Cys-76 form a disulfide bridge. N-linked (GlcNAc...) asparagine glycosylation is present at Asn-81. The cysteines at positions 211 and 214 are disulfide-linked. A glycan (N-linked (GlcNAc...) asparagine) is linked at Asn-291. Residues Cys-318 and Cys-321 are joined by a disulfide bond.

This sequence belongs to the glycosyltransferase 10 family. Post-translationally, N-glycosylated. In terms of tissue distribution, leukocytic/myeloid lineage cells.

Its subcellular location is the golgi apparatus. It is found in the golgi stack membrane. The catalysed reaction is an N-acetyl-alpha-neuraminyl-(2-&gt;3)-beta-D-galactosyl-(1-&gt;4)-N-acetyl-beta-D-glucosaminyl derivative + GDP-beta-L-fucose = an alpha-Neu5Ac-(2-&gt;3)-beta-D-Gal-(1-&gt;4)-[alpha-L-Fuc-(1-&gt;3)]-beta-D-GlcNAc derivative + GDP + H(+). The enzyme catalyses a neolactoside IV(3)-alpha-NeuAc-nLc4Cer + GDP-beta-L-fucose = a neolactoside IV(3)-alpha-NeuNAc,III(3)-alpha-Fuc-nLc4Cer + GDP + H(+). It catalyses the reaction a neolactoside VI(3)-alpha-NeuNAc-nLc6Cer + GDP-beta-L-fucose = a neolactoside VI(3)-alpha-NeuAc,V(3)-alphaFuc-nLc6Cer + GDP + H(+). It carries out the reaction an alpha-Neu5Ac-(2-&gt;3)-beta-D-Gal-(1-&gt;4)-beta-D-GlcNAc-(1-&gt;3)-beta-D-Gal-(1-&gt;4)-[alpha-L-Fuc-(1-&gt;3)]-beta-D-GlcNAc derivative + GDP-beta-L-fucose = an alpha-Neu5Ac-(2-&gt;3)-beta-D-Gal-(1-&gt;4)-[alpha-L-Fuc-(1-&gt;3)]-beta-D-GlcNAc-(1-&gt;3)-beta-D-Gal-(1-&gt;4)-[alpha-L-Fuc-(1-&gt;3)]-beta-D-GlcNAc derivative + GDP + H(+). The catalysed reaction is an alpha-Neu5Ac-(2-&gt;3)-beta-D-Gal-(1-&gt;4)-beta-D-GlcNAc6S derivative + GDP-beta-L-fucose = an alpha-Neu5Ac-(2-&gt;3)-beta-D-Gal-(1-&gt;4)-[alpha-L-Fuc-(1-&gt;3)]-beta-D-GlcNAc6S derivative + GDP + H(+). The enzyme catalyses alpha-Neu5Ac-(2-&gt;3)-beta-D-Gal-(1-&gt;4)-beta-D-GlcNAc-(1-&gt;3)-beta-D-Gal-(1-&gt;4)-D-Glc + GDP-beta-L-fucose = alpha-Neu5Ac-(2-&gt;3)-beta-D-Gal-(1-&gt;4)-[alpha-L-Fuc-(1-&gt;3)]-beta-D-GlcNAc-(1-&gt;3)-beta-D-Gal-(1-&gt;4)-D-Glc + GDP + H(+). It catalyses the reaction alpha-Neu5Ac-(2-&gt;3)-beta-D-Gal-(1-&gt;4)-beta-D-GlcNAc-(1-&gt;3)-beta-D-Gal-(1-&gt;4)-[alpha-L-Fuc-(1-&gt;3)]-beta-D-GlcNAc-(1-&gt;3)-beta-D-Gal-(1-&gt;4)-beta-D-GlcNAc + GDP-beta-L-fucose = alpha-Neu5Ac-(2-&gt;3)-beta-D-Gal-(1-&gt;4)-[alpha-L-Fuc-(1-&gt;3)]-beta-D-GlcNAc-(1-&gt;3)-beta-D-Gal-(1-&gt;4)-[alpha-L-Fuc-(1-&gt;3)]-beta-D-GlcNAc-(1-&gt;3)-beta-D-Gal-(1-&gt;4)-beta-D-GlcNAc + GDP + H(+). It carries out the reaction alpha-Neu5Ac-(2-&gt;3)-beta-D-Gal-(1-&gt;4)-beta-D-GlcNAc-(1-&gt;3)-beta-D-Gal-(1-&gt;4)-beta-D-GlcNAc-(1-&gt;3)-beta-D-Gal-(1-&gt;4)-beta-D-GlcNAc + GDP-beta-L-fucose = alpha-Neu5Ac-(2-&gt;3)-beta-D-Gal-(1-&gt;4)-[alpha-L-Fuc-(1-&gt;3)]-beta-D-GlcNAc-(1-&gt;3)-beta-D-Gal-(1-&gt;4)-beta-D-GlcNAc-(1-&gt;3)-beta-D-Gal-(1-&gt;4)-beta-D-GlcNAc + GDP + H(+). It functions in the pathway protein modification; protein glycosylation. Inhibited by NaCl. Inhibited by GDP in a concentration dependent manner, with an IC(50) value of 93 uM. Also inhibited by GMP and GTP. Inhibited by N-ethylmaleimide. Activated by poly(ethylene glycol) by enhancing the thermal stability of FUT7. Activated by Mn2+, Ca2+, and Mg2+. Both panosialin A and B inhibit activity with IC(50) values of 4.8 and 5.3 ug/ml, respectively. Inhibited by gallic acid (GA) and (-)-epigallocatechin gallate (EGCG) in a time-dependent and irreversible manner with IC(50) values of 60 and 700 nM, respectively. Functionally, catalyzes the transfer of L-fucose, from a guanosine diphosphate-beta-L-fucose, to the N-acetyl glucosamine (GlcNAc) of a distal alpha2,3 sialylated lactosamine unit of a glycoprotein or a glycolipid-linked sialopolylactosamines chain through an alpha-1,3 glycosidic linkage and participates in the final fucosylation step in the biosynthesis of the sialyl Lewis X (sLe(x)), a carbohydrate involved in cell and matrix adhesion during leukocyte trafficking and fertilization. In vitro, also synthesizes sialyl-dimeric-Lex structures, from VIM-2 structures and both di-fucosylated and trifucosylated structures from mono-fucosylated precursors. However does not catalyze alpha 1-3 fucosylation when an internal alpha 1-3 fucosylation is present in polylactosamine chain and the fucosylation rate of the internal GlcNAc residues is reduced once fucose has been added to the distal GlcNAc. Also catalyzes the transfer of a fucose from GDP-beta-fucose to the 6-sulfated a(2,3)sialylated substrate to produce 6-sulfo sLex mediating significant L-selectin-dependent cell adhesion. Through sialyl-Lewis(x) biosynthesis, can control SELE- and SELP-mediated cell adhesion with leukocytes and allows leukocytes tethering and rolling along the endothelial tissue thereby enabling the leukocytes to accumulate at a site of inflammation. May enhance embryo implantation through sialyl Lewis X (sLeX)-mediated adhesion of embryo cells to endometrium. May affect insulin signaling by up-regulating the phosphorylation and expression of some signaling molecules involved in the insulin-signaling pathway through SLe(x) which is present on the glycans of the INSRR alpha subunit. This chain is Alpha-(1,3)-fucosyltransferase 7, found in Homo sapiens (Human).